The chain runs to 270 residues: ATP synthase subunit a (270 aa).

Transmembrane regions (helical) follow at residues 37-57, 98-118, 143-163, 208-228, and 239-259; these read NVHI…LGVF, IAPL…MDLV, DVNI…YYSI, LFGN…MLPW, and AIFH…LTIV.

It belongs to the ATPase A chain family. As to quaternary structure, F-type ATPases have 2 components, CF(1) - the catalytic core - and CF(0) - the membrane proton channel. CF(1) has five subunits: alpha(3), beta(3), gamma(1), delta(1), epsilon(1). CF(0) has three main subunits: a(1), b(2) and c(9-12). The alpha and beta chains form an alternating ring which encloses part of the gamma chain. CF(1) is attached to CF(0) by a central stalk formed by the gamma and epsilon chains, while a peripheral stalk is formed by the delta and b chains.

The protein localises to the cell inner membrane. Its function is as follows. Key component of the proton channel; it plays a direct role in the translocation of protons across the membrane. The chain is ATP synthase subunit a from Vibrio cholerae serotype O1 (strain ATCC 39315 / El Tor Inaba N16961).